Here is a 310-residue protein sequence, read N- to C-terminus: Iron ABC transporter substrate-binding lipoprotein MtsA (310 aa).

The first 20 residues, 1–20 (MGKRMSLILGAFLSVFLLVA), serve as a signal peptide directing secretion. Cys-21 carries the N-palmitoyl cysteine lipid modification. A lipid anchor (S-diacylglycerol cysteine) is attached at Cys-21. The Fe(2+) site is built by His-68, His-140, Glu-206, and Asp-281.

The protein belongs to the bacterial solute-binding protein 9 family. Lipoprotein receptor antigen (Lrai) subfamily.

It localises to the cell membrane. Part of the ATP-binding cassette (ABC) transport system MtsABC involved in iron import. Binds iron with high affinity and specificity and delivers it to the membrane permease for translocation into the cytoplasm. Has low affinity for Zn(2+) and Cu(2+). This chain is Iron ABC transporter substrate-binding lipoprotein MtsA (mtsA), found in Streptococcus pyogenes serotype M1.